Here is a 582-residue protein sequence, read N- to C-terminus: Aspartate--tRNA ligase (582 aa).

E174 lines the L-aspartate pocket. Residues 198-201 form an aspartate region; that stretch reads QITK. An L-aspartate-binding site is contributed by R220. Residues 220–222 and Q229 contribute to the ATP site; that span reads RDE. Residue H443 coordinates L-aspartate. E477 is an ATP binding site. R484 is an L-aspartate binding site. 529–532 is an ATP binding site; sequence GLDR.

The protein belongs to the class-II aminoacyl-tRNA synthetase family. Type 1 subfamily. In terms of assembly, homodimer.

The protein localises to the cytoplasm. The enzyme catalyses tRNA(Asp) + L-aspartate + ATP = L-aspartyl-tRNA(Asp) + AMP + diphosphate. In terms of biological role, catalyzes the attachment of L-aspartate to tRNA(Asp) in a two-step reaction: L-aspartate is first activated by ATP to form Asp-AMP and then transferred to the acceptor end of tRNA(Asp). In Streptococcus pyogenes serotype M28 (strain MGAS6180), this protein is Aspartate--tRNA ligase.